Consider the following 309-residue polypeptide: Malate dehydrogenase (309 aa).

Residues 9–14 (GAGAVG) and aspartate 33 each bind NAD(+). 2 residues coordinate substrate: arginine 82 and arginine 88. Residues asparagine 95 and 118–120 (VTN) each bind NAD(+). Asparagine 120 and arginine 151 together coordinate substrate. Histidine 175 (proton acceptor) is an active-site residue.

The protein belongs to the LDH/MDH superfamily. MDH type 3 family.

The enzyme catalyses (S)-malate + NAD(+) = oxaloacetate + NADH + H(+). Catalyzes the reversible oxidation of malate to oxaloacetate. This Thermomicrobium roseum (strain ATCC 27502 / DSM 5159 / P-2) protein is Malate dehydrogenase.